A 730-amino-acid polypeptide reads, in one-letter code: Ribosomal RNA large subunit methyltransferase K/L (730 aa).

Positions 46-157 constitute a THUMP domain; it reads TAYRLCLWSR…RGEAILSLDL (112 aa).

The protein belongs to the methyltransferase superfamily. RlmKL family.

The protein localises to the cytoplasm. It catalyses the reaction guanosine(2445) in 23S rRNA + S-adenosyl-L-methionine = N(2)-methylguanosine(2445) in 23S rRNA + S-adenosyl-L-homocysteine + H(+). The enzyme catalyses guanosine(2069) in 23S rRNA + S-adenosyl-L-methionine = N(2)-methylguanosine(2069) in 23S rRNA + S-adenosyl-L-homocysteine + H(+). Specifically methylates the guanine in position 2445 (m2G2445) and the guanine in position 2069 (m7G2069) of 23S rRNA. The chain is Ribosomal RNA large subunit methyltransferase K/L from Pseudomonas putida (strain W619).